The following is a 73-amino-acid chain: UPF0154 protein MG335.1 homolog (73 aa).

Residues leucine 6–isoleucine 26 form a helical membrane-spanning segment.

This sequence belongs to the UPF0154 family.

The protein localises to the membrane. This Mycoplasma pneumoniae (strain ATCC 29342 / M129 / Subtype 1) (Mycoplasmoides pneumoniae) protein is UPF0154 protein MG335.1 homolog.